We begin with the raw amino-acid sequence, 502 residues long: Glutamate--tRNA ligase (502 aa).

The 'HIGH' region motif lies at 9 to 19 (PSPTGDPHVGT). Zn(2+) is bound by residues Cys-106, Cys-108, Cys-133, and His-135. The 'KMSKS' region signature appears at 250–254 (KLSKR). Residue Lys-253 coordinates ATP.

This sequence belongs to the class-I aminoacyl-tRNA synthetase family. Glutamate--tRNA ligase type 1 subfamily. As to quaternary structure, monomer. Requires Zn(2+) as cofactor.

It localises to the cytoplasm. The catalysed reaction is tRNA(Glu) + L-glutamate + ATP = L-glutamyl-tRNA(Glu) + AMP + diphosphate. Functionally, catalyzes the attachment of glutamate to tRNA(Glu) in a two-step reaction: glutamate is first activated by ATP to form Glu-AMP and then transferred to the acceptor end of tRNA(Glu). This Protochlamydia amoebophila (strain UWE25) protein is Glutamate--tRNA ligase.